Here is a 571-residue protein sequence, read N- to C-terminus: FAD-linked oxidoreductase patO (571 aa).

Positions 1 to 23 (MRLHQSPPRLLVCILSVLQVSAG) are cleaved as a signal peptide. 10 N-linked (GlcNAc...) asparagine glycosylation sites follow: Asn47, Asn101, Asn125, Asn179, Asn341, Asn374, Asn380, Asn421, Asn445, and Asn480. The 180-residue stretch at 115–294 (TLGAMVRYAV…YAVTVKTFPD (180 aa)) folds into the FAD-binding PCMH-type domain.

It belongs to the oxygen-dependent FAD-linked oxidoreductase family. The cofactor is FAD.

It is found in the vacuole lumen. Its pathway is mycotoxin biosynthesis; patulin biosynthesis. Functionally, FAD-linked oxidoreductase; part of the gene cluster that mediates the biosynthesis of patulin, an acetate-derived tetraketide mycotoxin produced by several fungal species that shows antimicrobial properties against several bacteria. PatO acts with patJ in the vacuole to convert gentisyl alcohol to isoepoxydon. The pathway begins with the synthesis of 6-methylsalicylic acid by the polyketide synthase (PKS) patK via condensation of acetate and malonate units. The 6-methylsalicylic acid decarboxylase patG then catalyzes the decarboxylation of 6-methylsalicylic acid to yield m-cresol (also known as 3-methylphenol). These first reactions occur in the cytosol. The intermediate m-cresol is then transported into the endoplasmic reticulum where the cytochrome P450 monooxygenase patH converts it to m-hydroxybenzyl alcohol, which is further converted to gentisyl alcohol by the cytochrome P450 monooxygenase patI. The oxidoreductases patJ and patO further convert gentisyl alcohol to isoepoxydon in the vacuole. PatN catalyzes then the transformation of isoepoxydon into phyllostine. The cluster protein patF is responsible for the conversion from phyllostine to neopatulin whereas the alcohol dehydrogenase patD converts neopatulin to E-ascladiol. The steps between isoepoxydon and E-ascladiol occur in the cytosol, and E-ascladiol is probably secreted to the extracellular space by one of the cluster-specific transporters patC or patM. Finally, the secreted patulin synthase patE catalyzes the conversion of E-ascladiol to patulin. The chain is FAD-linked oxidoreductase patO from Penicillium expansum (Blue mold rot fungus).